Reading from the N-terminus, the 194-residue chain is dATP triphosphohydrolase (194 aa).

A dATP-binding site is contributed by Arg-17. Co(2+) is bound by residues His-32, His-71, Asp-72, Glu-75, Asp-80, and Asp-123.

It belongs to the Caudovirales dATP triphosphohydrolase family. It depends on Co(2+) as a cofactor.

The enzyme catalyses dATP + H2O = 2'-deoxyadenosine + triphosphate + H(+). It carries out the reaction dADP + H2O = 2'-deoxyadenosine + diphosphate. It catalyses the reaction dAMP + H2O = 2'-deoxyadenosine + phosphate. In terms of biological role, catalyzes the hydrolysis of dATP, dADP and dAMP into dA. This step is essential for Z-genome synthesis (containing aminoadenine instead of adenine). Specifically removes dATP and its precursor dADP from the nucleotide pool of the host, preventing the incorporation of A into the phage genome and favoring the integration of the Z-base into the viral genome. This Salmonella phage PMBT28 protein is dATP triphosphohydrolase (datZ).